We begin with the raw amino-acid sequence, 428 residues long: Chaperone SurA (428 aa).

A signal peptide spans Met-1 to Ala-20. 2 consecutive PpiC domains span residues Ser-171 to Asp-272 and Val-282 to Asp-382.

The protein resides in the periplasm. The catalysed reaction is [protein]-peptidylproline (omega=180) = [protein]-peptidylproline (omega=0). Its function is as follows. Chaperone involved in the correct folding and assembly of outer membrane proteins. Recognizes specific patterns of aromatic residues and the orientation of their side chains, which are found more frequently in integral outer membrane proteins. May act in both early periplasmic and late outer membrane-associated steps of protein maturation. This chain is Chaperone SurA, found in Escherichia coli O157:H7.